A 325-amino-acid polypeptide reads, in one-letter code: RNA ligase 1 (325 aa).

Requires Mg(2+) as cofactor. It depends on Mn(2+) as a cofactor. Post-translationally, AMPylates itself (auto-AMPylation).

It carries out the reaction ATP + (ribonucleotide)n-3'-hydroxyl + 5'-phospho-(ribonucleotide)m = (ribonucleotide)n+m + AMP + diphosphate.. Functionally, functions as an RNA ligase, in vitro. The ligation reaction entails three nucleotidyl transfer steps. In the first step, the RNA ligase reacts with ATP in the absence of nucleic acid to form a covalent ligase-AMP intermediate and release pyrophosphate. In step 2, the ligase-AMP binds to the nucleic acid and transfers the adenylate to the 5'-PO4 terminus to form an adenylylated intermediate. In step 3, the RNA ligase directs the attack of the 3'-OH on the 5'-phosphoanhydride linkage, resulting in a repaired 3'-5' phosphodiester and release of AMP. Exhibits selectivity for single-stranded RNA substrates and may not have nick-sealing activity on double-stranded DNA-RNA hybrids. May play a role in maintaining RNA integrity under stress conditions, for example in response to reactive oxygen species (ROS). The sequence is that of RNA ligase 1 from Rattus norvegicus (Rat).